The chain runs to 319 residues: Olfactory receptor 8U3 (319 aa).

The Extracellular portion of the chain corresponds to 1-25; that stretch reads MAEVNISYVSEFILKGITDRPELQA. N-linked (GlcNAc...) asparagine glycosylation is present at N5. A helical transmembrane segment spans residues 26–46; it reads PCFVMFLTIYLVTVLGNLGLI. The Cytoplasmic segment spans residues 47–54; sequence VIIRVDSR. The helical transmembrane segment at 55 to 75 threads the bilayer; that stretch reads LHTPMYFFLSHLAFVDLCYSS. Residues 76–99 lie on the Extracellular side of the membrane; sequence AITPKMMVNFVVERNTIPFHACAT. C97 and C189 are joined by a disulfide. The chain crosses the membrane as a helical span at residues 100–120; sequence QLGCFLTFMITECFLLASMAY. Residues 121–133 lie on the Cytoplasmic side of the membrane; it reads DRYVAICSPLHYS. Residues 134–154 form a helical membrane-spanning segment; the sequence is TLMSKRVCIQLVAVPYVYSFL. Residues 155–196 are Extracellular-facing; it reads VALFHTIITFRLTYCGPNVINHFYCDDLPLLALSCSDTHMKE. A helical membrane pass occupies residues 197–217; that stretch reads ILIFAFAGFDMICSSSIVLTS. Residues 218–237 lie on the Cytoplasmic side of the membrane; it reads YLFIIAAILRIRSTQGRRKA. Residues 238–258 traverse the membrane as a helical segment; the sequence is ISTCGSHMVAVTIFYGTLIFM. Over 259–271 the chain is Extracellular; the sequence is YLQPKSNHSLDTD. N265 carries an N-linked (GlcNAc...) asparagine glycan. A helical membrane pass occupies residues 272 to 292; sequence KMASVFYTVVIPMLNPLIYSL. At 293-319 the chain is on the cytoplasmic side; sequence RNKEVKDASKKALDKGYETLKILRLSK.

The protein belongs to the G-protein coupled receptor 1 family.

Its subcellular location is the cell membrane. In terms of biological role, potential odorant receptor. The protein is Olfactory receptor 8U3 of Mus musculus (Mouse).